Here is a 378-residue protein sequence, read N- to C-terminus: Queuine tRNA-ribosyltransferase (378 aa).

The Proton acceptor role is filled by aspartate 91. Substrate is bound by residues 91–95 (DSGGF), aspartate 145, glutamine 189, and glycine 216. The segment at 247 to 253 (GVGKPED) is RNA binding. Aspartate 266 (nucleophile) is an active-site residue. Residues 271–275 (TRNAR) form an RNA binding; important for wobble base 34 recognition region. Zn(2+) is bound by residues cysteine 304, cysteine 306, cysteine 309, and histidine 335.

This sequence belongs to the queuine tRNA-ribosyltransferase family. In terms of assembly, homodimer. Within each dimer, one monomer is responsible for RNA recognition and catalysis, while the other monomer binds to the replacement base PreQ1. Zn(2+) serves as cofactor.

The enzyme catalyses 7-aminomethyl-7-carbaguanine + guanosine(34) in tRNA = 7-aminomethyl-7-carbaguanosine(34) in tRNA + guanine. It functions in the pathway tRNA modification; tRNA-queuosine biosynthesis. Its function is as follows. Catalyzes the base-exchange of a guanine (G) residue with the queuine precursor 7-aminomethyl-7-deazaguanine (PreQ1) at position 34 (anticodon wobble position) in tRNAs with GU(N) anticodons (tRNA-Asp, -Asn, -His and -Tyr). Catalysis occurs through a double-displacement mechanism. The nucleophile active site attacks the C1' of nucleotide 34 to detach the guanine base from the RNA, forming a covalent enzyme-RNA intermediate. The proton acceptor active site deprotonates the incoming PreQ1, allowing a nucleophilic attack on the C1' of the ribose to form the product. After dissociation, two additional enzymatic reactions on the tRNA convert PreQ1 to queuine (Q), resulting in the hypermodified nucleoside queuosine (7-(((4,5-cis-dihydroxy-2-cyclopenten-1-yl)amino)methyl)-7-deazaguanosine). This chain is Queuine tRNA-ribosyltransferase, found in Vibrio vulnificus (strain CMCP6).